The following is a 216-amino-acid chain: Cell envelope integrity protein Cei (216 aa).

A helical membrane pass occupies residues 25-45 (PAIVVVAFLVVVTCVMWTLAL).

The protein localises to the cell membrane. Functionally, contributes to cell envelope integrity and virulence. The sequence is that of Cell envelope integrity protein Cei from Mycobacterium tuberculosis (strain ATCC 25618 / H37Rv).